The sequence spans 443 residues: Threonine/serine transporter TdcC (443 aa).

11 helical membrane-spanning segments follow: residues 22–42 (TTWTLGLFGTAIGAGVLFFPI), 44–64 (AGFGGLIPILLMLVLAYPIAF), 97–117 (GVVITFLYFFAICPLLWIYGV), 140–160 (VVALFLLLLMAFVIWFGKDLM), 163–183 (VMSYLVWPFIASLVLISLSLI), 207–227 (ILVTVWLGISIMVFSFNFSPI), 259–279 (ASMLMVAVVMFFAFSCLFTLS), 319–339 (ASIIALVAIFKSFFGHYLGTL), 366–386 (ISMIFIMGSTWIVAYANPNIL), 389–409 (IEAMGAPIIASLLCLLPMYAI), and 423–443 (DNVFVTLIGLLTILNIVYKLF).

It belongs to the amino acid/polyamine transporter 2 family. SdaC/TdcC subfamily.

It localises to the cell inner membrane. It carries out the reaction L-threonine(in) + H(+)(in) = L-threonine(out) + H(+)(out). It catalyses the reaction L-serine(in) + H(+)(in) = L-serine(out) + H(+)(out). In terms of biological role, involved in the import of threonine and serine into the cell, with the concomitant import of a proton (symport system). In Salmonella arizonae (strain ATCC BAA-731 / CDC346-86 / RSK2980), this protein is Threonine/serine transporter TdcC.